Consider the following 484-residue polypeptide: Aldehyde dehydrogenase family 3 member A2 (484 aa).

The Cytoplasmic portion of the chain corresponds to 1 to 463 (MERQVLRLRQ…FLLKQFNKGR (463 aa)). 185–190 (GNTAVG) contributes to the NAD(+) binding site. Residues glutamate 207 and cysteine 241 contribute to the active site. At serine 293 the chain carries Phosphoserine. Residues 464-484 (LGMLLFVCLVAVAAVIVKDQL) form a helical membrane-spanning segment. Residues 481–484 (KDQL) carry the Prevents secretion from ER motif.

The protein belongs to the aldehyde dehydrogenase family. Homodimer.

It localises to the membrane. The protein resides in the microsome membrane. The protein localises to the endoplasmic reticulum membrane. The catalysed reaction is an aldehyde + NAD(+) + H2O = a carboxylate + NADH + 2 H(+). It carries out the reaction a fatty aldehyde + NAD(+) + H2O = a fatty acid + NADH + 2 H(+). The enzyme catalyses hexadecanoate + NADH + 2 H(+) = hexadecanal + NAD(+) + H2O. It catalyses the reaction octanal + NAD(+) + H2O = octanoate + NADH + 2 H(+). The catalysed reaction is (2E)-hexadecenal + NAD(+) + H2O = (E)-hexadec-2-enoate + NADH + 2 H(+). It carries out the reaction 22-oxodocosanoate + NAD(+) + H2O = docosanedioate + NADH + 2 H(+). The enzyme catalyses 2,6,10,14-tetramethylpentadecanal + NAD(+) + H2O = 2,6,10,14-tetramethylpentadecanoate + NADH + 2 H(+). It catalyses the reaction octadecanal + NAD(+) + H2O = octadecanoate + NADH + 2 H(+). The catalysed reaction is dodecanoate + NADH + 2 H(+) = dodecanal + NAD(+) + H2O. It carries out the reaction decanal + NAD(+) + H2O = decanoate + NADH + 2 H(+). The enzyme catalyses tetradecanal + NAD(+) + H2O = tetradecanoate + NADH + 2 H(+). It catalyses the reaction heptanal + NAD(+) + H2O = heptanoate + NADH + 2 H(+). The catalysed reaction is (2E,6E)-farnesal + NAD(+) + H2O = (2E,6E)-farnesoate + NADH + 2 H(+). Its function is as follows. Catalyzes the oxidation of medium and long-chain aliphatic aldehydes to fatty acids. Active on a variety of saturated and unsaturated aliphatic aldehydes between 6 and 24 carbons in length. Responsible for conversion of the sphingosine 1-phosphate (S1P) degradation product hexadecenal to hexadecenoic acid. This is Aldehyde dehydrogenase family 3 member A2 (Aldh3a2) from Mus musculus (Mouse).